The sequence spans 156 residues: Male-specific protein scotti (156 aa).

Positions 26 to 48 (TADAGDDADTLEDGQQQQQQQHQ) are disordered. N-linked (GlcNAc...) asparagine glycosylation is present at Asn-137.

The protein belongs to the male-specific scotti family.

In terms of biological role, post-meiotically transcribed gene that has a role in late spermiogenesis; required for actin cone progression during spermatid individualization. The chain is Male-specific protein scotti from Drosophila erecta (Fruit fly).